A 201-amino-acid chain; its full sequence is Ribonuclease HII (201 aa).

Residues 12–201 (GIVCGIDEVG…FAPVAQYMLF (190 aa)) form the RNase H type-2 domain. Residues D18, E19, and D113 each coordinate a divalent metal cation.

The protein belongs to the RNase HII family. The cofactor is Mn(2+). Mg(2+) serves as cofactor.

It localises to the cytoplasm. It carries out the reaction Endonucleolytic cleavage to 5'-phosphomonoester.. Its function is as follows. Endonuclease that specifically degrades the RNA of RNA-DNA hybrids. In Paramagnetospirillum magneticum (strain ATCC 700264 / AMB-1) (Magnetospirillum magneticum), this protein is Ribonuclease HII (rnhB).